Reading from the N-terminus, the 234-residue chain is tRNA (guanine-N(1)-)-methyltransferase (234 aa).

S-adenosyl-L-methionine contacts are provided by residues Gly115 and 135 to 140; that span reads VGDYIL.

The protein belongs to the RNA methyltransferase TrmD family. Homodimer.

It is found in the cytoplasm. The enzyme catalyses guanosine(37) in tRNA + S-adenosyl-L-methionine = N(1)-methylguanosine(37) in tRNA + S-adenosyl-L-homocysteine + H(+). Functionally, specifically methylates guanosine-37 in various tRNAs. In Rickettsia typhi (strain ATCC VR-144 / Wilmington), this protein is tRNA (guanine-N(1)-)-methyltransferase.